A 497-amino-acid polypeptide reads, in one-letter code: Glycerol kinase (497 aa).

T12 contacts ADP. ATP is bound by residues T12, T13, and S14. Position 12 (T12) interacts with sn-glycerol 3-phosphate. R16 is a binding site for ADP. Residues R82, E83, Y134, and D243 each coordinate sn-glycerol 3-phosphate. Glycerol is bound by residues R82, E83, Y134, D243, and Q244. T265 and G308 together coordinate ADP. ATP is bound by residues T265, G308, Q312, and G409. 2 residues coordinate ADP: G409 and N413.

It belongs to the FGGY kinase family.

The enzyme catalyses glycerol + ATP = sn-glycerol 3-phosphate + ADP + H(+). Its pathway is polyol metabolism; glycerol degradation via glycerol kinase pathway; sn-glycerol 3-phosphate from glycerol: step 1/1. Inhibited by fructose 1,6-bisphosphate (FBP). In terms of biological role, key enzyme in the regulation of glycerol uptake and metabolism. Catalyzes the phosphorylation of glycerol to yield sn-glycerol 3-phosphate. This chain is Glycerol kinase, found in Nitratidesulfovibrio vulgaris (strain DSM 19637 / Miyazaki F) (Desulfovibrio vulgaris).